Here is a 387-residue protein sequence, read N- to C-terminus: UDP-Gal:alpha-D-GlcNAc-diphosphoundecaprenol alpha-1,3-galactosyltransferase (387 aa).

It belongs to the glycosyltransferase group 1 family. Glycosyltransferase 4 subfamily. Mg(2+) is required as a cofactor. Mn(2+) serves as cofactor. It depends on Fe(2+) as a cofactor.

It catalyses the reaction N-acetyl-alpha-D-glucosaminyl-di-trans,octa-cis-undecaprenyl diphosphate + UDP-alpha-D-galactose = alpha-D-Gal-(1-&gt;3)-alpha-D-GlcNAc-di-trans,octa-cis-undecaprenyl diphosphate + UDP + H(+). It functions in the pathway bacterial outer membrane biogenesis; LPS O-antigen biosynthesis. In terms of biological role, involved in the biosynthesis of the lipopolysaccharide (LPS) O-antigen region. Catalyzes the transfer of galactose from UDP-galactose to GlcNAc-undecaprenyl diphosphate via an alpha1,3-linkage. Has strict substrate specificity. The protein is UDP-Gal:alpha-D-GlcNAc-diphosphoundecaprenol alpha-1,3-galactosyltransferase of Escherichia coli.